Reading from the N-terminus, the 227-residue chain is Phosphoribosylformylglycinamidine synthase subunit PurQ (227 aa).

The Glutamine amidotransferase type-1 domain maps to 3 to 225; sequence FAVIVLPGSN…VKNWRETHVA (223 aa). C86 serves as the catalytic Nucleophile. Catalysis depends on residues H194 and E196.

In terms of assembly, part of the FGAM synthase complex composed of 1 PurL, 1 PurQ and 2 PurS subunits.

The protein localises to the cytoplasm. The catalysed reaction is N(2)-formyl-N(1)-(5-phospho-beta-D-ribosyl)glycinamide + L-glutamine + ATP + H2O = 2-formamido-N(1)-(5-O-phospho-beta-D-ribosyl)acetamidine + L-glutamate + ADP + phosphate + H(+). It carries out the reaction L-glutamine + H2O = L-glutamate + NH4(+). Its pathway is purine metabolism; IMP biosynthesis via de novo pathway; 5-amino-1-(5-phospho-D-ribosyl)imidazole from N(2)-formyl-N(1)-(5-phospho-D-ribosyl)glycinamide: step 1/2. Functionally, part of the phosphoribosylformylglycinamidine synthase complex involved in the purines biosynthetic pathway. Catalyzes the ATP-dependent conversion of formylglycinamide ribonucleotide (FGAR) and glutamine to yield formylglycinamidine ribonucleotide (FGAM) and glutamate. The FGAM synthase complex is composed of three subunits. PurQ produces an ammonia molecule by converting glutamine to glutamate. PurL transfers the ammonia molecule to FGAR to form FGAM in an ATP-dependent manner. PurS interacts with PurQ and PurL and is thought to assist in the transfer of the ammonia molecule from PurQ to PurL. This is Phosphoribosylformylglycinamidine synthase subunit PurQ from Bacillus licheniformis (strain ATCC 14580 / DSM 13 / JCM 2505 / CCUG 7422 / NBRC 12200 / NCIMB 9375 / NCTC 10341 / NRRL NRS-1264 / Gibson 46).